The chain runs to 304 residues: Nucleotide-binding protein KRH_12070 (304 aa).

ATP is bound at residue 27–34; that stretch reads GMSGAGRS. 78-81 is a GTP binding site; it reads DVRG.

It belongs to the RapZ-like family.

Functionally, displays ATPase and GTPase activities. This is Nucleotide-binding protein KRH_12070 from Kocuria rhizophila (strain ATCC 9341 / DSM 348 / NBRC 103217 / DC2201).